Consider the following 892-residue polypeptide: Translation initiation factor IF-2 (892 aa).

The tract at residues 88–304 is disordered; sequence KKRTFVKRDP…SSLQQGFQKP (217 aa). 2 stretches are compositionally biased toward basic and acidic residues: residues 93-159 and 166-216; these read VKRD…KDKV and DMTK…EENK. The span at 254-269 shows a compositional bias: basic residues; it reads GRGRNAKAARPAKKGK. The segment covering 270 to 282 has biased composition (basic and acidic residues); that stretch reads HAESKADREEARA. One can recognise a tr-type G domain in the interval 391-560; it reads PRAPVVTIMG…LLQAEVLELK (170 aa). Positions 400 to 407 are G1; it reads GHVDHGKT. 400–407 provides a ligand contact to GTP; the sequence is GHVDHGKT. The segment at 425–429 is G2; sequence GITQH. The tract at residues 446 to 449 is G3; sequence DTPG. Residues 446–450 and 500–503 each bind GTP; these read DTPGH and NKID. Residues 500-503 form a G4 region; the sequence is NKID. Positions 536–538 are G5; that stretch reads SAK.

It belongs to the TRAFAC class translation factor GTPase superfamily. Classic translation factor GTPase family. IF-2 subfamily.

It localises to the cytoplasm. One of the essential components for the initiation of protein synthesis. Protects formylmethionyl-tRNA from spontaneous hydrolysis and promotes its binding to the 30S ribosomal subunits. Also involved in the hydrolysis of GTP during the formation of the 70S ribosomal complex. This is Translation initiation factor IF-2 from Salmonella choleraesuis (strain SC-B67).